We begin with the raw amino-acid sequence, 606 residues long: Pentatricopeptide repeat-containing protein At1g31920 (606 aa).

PPR repeat units follow at residues 96 to 130 (CTFDFNTMIRGYVNVMSFEEALCFYNEMMQRGNEP), 131 to 165 (DNFTYPCLLKACTRLKSIREGKQIHGQVFKLGLEA), 166 to 200 (DVFVQNSLINMYGRCGEMELSSAVFEKLESKTAAS), 201 to 227 (WSSMVSARAGMGMWSECLLLFRGMCSE), 233 to 263 (EESGMVSALLACANTGALNLGMSIHGFLLRN), 268 to 298 (NIIVQTSLVDMYVKCGCLDKALHIFQKMEKR), 299 to 333 (NNLTYSAMISGLALHGEGESALRMFSKMIKEGLEP), 334 to 368 (DHVVYVSVLNACSHSGLVKEGRRVFAEMLKEGKVE), and 370 to 404 (TAEHYGCLVDLLGRAGLLEEALETIQSIPIEKNDV). A type E motif region spans residues 405-480 (IWRTFLSQCR…TPGFSIVELK (76 aa)). A type E(+) motif region spans residues 481–511 (GKTHRFVSQDRSHPKCKEIYKMLHQMEWQLK). The tract at residues 512 to 606 (FEGYSPDLTQ…GGTCSCKDYW (95 aa)) is type DYW motif.

This sequence belongs to the PPR family. PCMP-H subfamily.

The polypeptide is Pentatricopeptide repeat-containing protein At1g31920 (PCMP-H11) (Arabidopsis thaliana (Mouse-ear cress)).